The chain runs to 235 residues: 1-(5-phosphoribosyl)-5-[(5-phosphoribosylamino)methylideneamino] imidazole-4-carboxamide isomerase (235 aa).

Residue D8 is the Proton acceptor of the active site. D127 serves as the catalytic Proton donor.

The protein belongs to the HisA/HisF family.

It is found in the cytoplasm. The catalysed reaction is 1-(5-phospho-beta-D-ribosyl)-5-[(5-phospho-beta-D-ribosylamino)methylideneamino]imidazole-4-carboxamide = 5-[(5-phospho-1-deoxy-D-ribulos-1-ylimino)methylamino]-1-(5-phospho-beta-D-ribosyl)imidazole-4-carboxamide. The protein operates within amino-acid biosynthesis; L-histidine biosynthesis; L-histidine from 5-phospho-alpha-D-ribose 1-diphosphate: step 4/9. The polypeptide is 1-(5-phosphoribosyl)-5-[(5-phosphoribosylamino)methylideneamino] imidazole-4-carboxamide isomerase (Aliarcobacter butzleri (strain RM4018) (Arcobacter butzleri)).